We begin with the raw amino-acid sequence, 186 residues long: Probable GPI-anchored cupredoxin ARB_05732-1 (186 aa).

A signal peptide spans 1–18 (MVNMNILTTVALAGLAAA). His55 serves as a coordination point for Cu cation. A disulfide bridge links Cys66 with Cys104. Asn87 carries N-linked (GlcNAc...) asparagine glycosylation. Cys98 and His103 together coordinate Cu cation. The interval 130–160 (GAGNGQAPSRVNNGSSGSGTPTSGGAPAATS) is disordered. A glycan (N-linked (GlcNAc...) asparagine) is linked at Asn142. The span at 143-160 (GSSGSGTPTSGGAPAATS) shows a compositional bias: low complexity. Gly153 carries the GPI-anchor amidated glycine lipid modification. The propeptide at 154–186 (GAPAATSPNAASSLTFSGAAALVAMGGAWIGLL) is removed in mature form.

The protein belongs to the multicopper oxidase family. Cu cation serves as cofactor.

Its subcellular location is the cell membrane. The protein resides in the secreted. Probable electron transfer copper protein that serves as a direct electron donor. This is Probable GPI-anchored cupredoxin ARB_05732-1 from Arthroderma benhamiae (strain ATCC MYA-4681 / CBS 112371) (Trichophyton mentagrophytes).